A 102-amino-acid chain; its full sequence is uncharacterized protein (102 aa).

This is an uncharacterized protein from Escherichia coli (Bacteriophage T4).